A 501-amino-acid chain; its full sequence is Lysine--tRNA ligase (501 aa).

2 residues coordinate Mg(2+): Glu-410 and Glu-417.

The protein belongs to the class-II aminoacyl-tRNA synthetase family. In terms of assembly, homodimer. Mg(2+) is required as a cofactor.

The protein localises to the cytoplasm. It catalyses the reaction tRNA(Lys) + L-lysine + ATP = L-lysyl-tRNA(Lys) + AMP + diphosphate. This is Lysine--tRNA ligase from Shewanella halifaxensis (strain HAW-EB4).